Consider the following 70-residue polypeptide: MIDNWVILAIRFYQRYISPLLGRHCRFYPTCSQYALEAITKYGLLRGGLLATRRLLHCHPWDAGGYDPVP.

It belongs to the UPF0161 family.

The protein localises to the cell membrane. Its function is as follows. Could be involved in insertion of integral membrane proteins into the membrane. The sequence is that of Putative membrane protein insertion efficiency factor from Moorella thermoacetica (strain ATCC 39073 / JCM 9320).